Here is an 887-residue protein sequence, read N- to C-terminus: Bifunctional uridylyltransferase/uridylyl-removing enzyme (887 aa).

A uridylyltransferase region spans residues 1–329 (MKGLNAKPFS…FPDEEAVTTI (329 aa)). The tract at residues 330-686 (INERFQKRGD…TRAAETGAGV (357 aa)) is uridylyl-removing. The HD domain maps to 448-570 (VDEHILMVVR…MRDERHLIAL (123 aa)). ACT domains are found at residues 687-772 (EVLV…GRLS) and 796-871 (VLSI…PETP). Residues 864 to 887 (TSPQPETPGKAPGKPSAGDRIIPR) are disordered.

It belongs to the GlnD family. It depends on Mg(2+) as a cofactor.

The enzyme catalyses [protein-PII]-L-tyrosine + UTP = [protein-PII]-uridylyl-L-tyrosine + diphosphate. It catalyses the reaction [protein-PII]-uridylyl-L-tyrosine + H2O = [protein-PII]-L-tyrosine + UMP + H(+). With respect to regulation, uridylyltransferase (UTase) activity is inhibited by glutamine, while glutamine activates uridylyl-removing (UR) activity. Modifies, by uridylylation and deuridylylation, the PII regulatory proteins (GlnB and homologs), in response to the nitrogen status of the cell that GlnD senses through the glutamine level. Under low glutamine levels, catalyzes the conversion of the PII proteins and UTP to PII-UMP and PPi, while under higher glutamine levels, GlnD hydrolyzes PII-UMP to PII and UMP (deuridylylation). Thus, controls uridylylation state and activity of the PII proteins, and plays an important role in the regulation of nitrogen assimilation and metabolism. The polypeptide is Bifunctional uridylyltransferase/uridylyl-removing enzyme (Nitrosospira multiformis (strain ATCC 25196 / NCIMB 11849 / C 71)).